The chain runs to 189 residues: Protein GrpE (189 aa).

Residues 1–38 (MTKSNETERMEESEETHSSDIRSASESDHASGSDHTES) show a composition bias toward basic and acidic residues. Residues 1–54 (MTKSNETERMEESEETHSSDIRSASESDHASGSDHTESADEIPTADAEQGELEQ) form a disordered region.

Belongs to the GrpE family. In terms of assembly, homodimer.

It localises to the cytoplasm. Functionally, participates actively in the response to hyperosmotic and heat shock by preventing the aggregation of stress-denatured proteins, in association with DnaK and GrpE. It is the nucleotide exchange factor for DnaK and may function as a thermosensor. Unfolded proteins bind initially to DnaJ; upon interaction with the DnaJ-bound protein, DnaK hydrolyzes its bound ATP, resulting in the formation of a stable complex. GrpE releases ADP from DnaK; ATP binding to DnaK triggers the release of the substrate protein, thus completing the reaction cycle. Several rounds of ATP-dependent interactions between DnaJ, DnaK and GrpE are required for fully efficient folding. The chain is Protein GrpE from Tropheryma whipplei (strain TW08/27) (Whipple's bacillus).